A 397-amino-acid polypeptide reads, in one-letter code: Putative gustatory receptor 85a (397 aa).

The Cytoplasmic segment spans residues 1–56 (MYSLIEAQLLGGKLVNRVMASLRRIIQRSLGYFCALNGILDFNTDIGTGNLRRYRV). The helical transmembrane segment at 57-77 (LFMYRLLHNFAVISLTLKFLF) threads the bilayer. Over 78-90 (DFTDHFKYIESST) the chain is Extracellular. The helical transmembrane segment at 91-111 (LITVNFFTYFTLVFFALLSSM) threads the bilayer. Residues 112-151 (GSCYQWQNRILAVLKELKHQRDLSRHMGYRVPRSKQNSID) lie on the Cytoplasmic side of the membrane. The helical transmembrane segment at 152–172 (YLLFALTVLLILRLSIHLATF) threads the bilayer. Residues 173 to 186 (TLSARMGFNHPCNC) are Extracellular-facing. The chain crosses the membrane as a helical span at residues 187–207 (FLPECMIFSMNYLLFAILAEI). Over 208–268 (TRCWWSLQSG…RYVTLAYMAR (61 aa)) the chain is Cytoplasmic. The helical transmembrane segment at 269-289 (NLWSGIVAGYLLVRFVIGNGL) threads the bilayer. Topologically, residues 290-293 (QDVE) are extracellular. The helical transmembrane segment at 294–314 (LVYLVFSFITCIQPLMLSLLV) threads the bilayer. At 315–375 (NSMTSTTGSL…FRINRSLAFR (61 aa)) the chain is on the cytoplasmic side. Residues 376–396 (SASLILVHVLYMVQSDYISIT) form a helical membrane-spanning segment. Asn397 is a topological domain (extracellular).

The protein belongs to the insect chemoreceptor superfamily. Gustatory receptor (GR) family. Gr22e subfamily.

Its subcellular location is the cell membrane. Probable gustatory receptor which mediates acceptance or avoidance behavior, depending on its substrates. In Drosophila melanogaster (Fruit fly), this protein is Putative gustatory receptor 85a (Gr85a).